A 1009-amino-acid polypeptide reads, in one-letter code: MKKKNWIYALIVTLIIIIAIVSMIFFVQTKYGDQSEKGSQSVSNKNNKIHIAIVNEDQPTTYNGKKVELGQAFIKRLANEKNYKFETVTRNVAESGLKNGGYQVMIVIPENFSKLAMQLDAKTPSKISLQYKTAVGQKEEVAKNTEKVVSNVLNDFNKNLVEIYLTSIIDNLHNAQKNVGAIMTREHGVNSKFSNYLLNPINDFPELFTDTLVNSISANKDITKWFQTYNKSLLSANSDTFRVNTDYNVSTLIEKQNSLFDEHNTAMDKMLQDYKSQKDSVELDNYINALKQMDSQIDQQSSMQDTGKEEYKQTVKENLDKLREIIQSQESPFSKGMIEDYRKQLTESLQDELANNKDLQDALNSIKMNNAQFAENLEKQLHDDIVKEPDTDTTFIYNMSKQDFIAAGLNEDEANKYEAIVKEAKRYKNEYNLKKPLAEHINLTDYDNQVAQDTSSLINDGVKVQRTETIKSNDINQLTVATDPHFNFEGDIKINGKKYDIKDQSVQLDTSNKEYKVEVNGVAKLKKDAEKDFLKDKTMHLQLLFGQANRQDEPNDKKATSVVDVTLNHNLDGRLSKDALSQQLSALSRFDAHYKMYTDTKGREDKPFDNKRLIDMMVDQVINDMESFKDDKVAVLHQIDSMEENSDKLIDDILNNKKNTTKNKEDISKLIDQLENVKKTFAEEPQEPKIDKGKNDEFNTMSSNLDKEISRISEKSTQLLSDTQESKSIADSVSGQLNQVDNNVNKLHATGRALGVRANDLNRQMAKNDKDNELFAKEFKKVLQNSKDGDRQNQALKAFMSNPVQKKNLENVLANNGNTDVISPTLFVLLMYLLSMITAYIFYSYERAKGQMNFIKDDYSSKNHLWNNVITSGVIGTTGLVEGLIVGLIAMNKFHVLAGYRAKFILMVILTMMVFVLINTYLLRQVKSIGMFLMIAALGLYFVAMNNLKAAGQGVTNKISPLSYIDNMFFNYLNAEHPIGLVLVILTVLVIIGFVLNMFIKHFKKERLI.

A helical transmembrane segment spans residues 7 to 27 (IYALIVTLIIIIAIVSMIFFV). Residues 680 to 697 (TFAEEPQEPKIDKGKNDE) are compositionally biased toward basic and acidic residues. A disordered region spans residues 680–707 (TFAEEPQEPKIDKGKNDEFNTMSSNLDK). 5 helical membrane passes run 822 to 842 (ISPTLFVLLMYLLSMITAYIF), 869 to 889 (VITSGVIGTTGLVEGLIVGLI), 903 to 923 (KFILMVILTMMVFVLINTYLL), 928 to 948 (SIGMFLMIAALGLYFVAMNNL), and 979 to 999 (IGLVLVILTVLVIIGFVLNMF).

The protein belongs to the EsaA family. As to quaternary structure, homodimer. Interacts with EssB.

It is found in the cell membrane. In terms of biological role, component of the type VII secretion system (Ess). Provides together with EssB and other components such as EssC and EssE a secretion plateform accross the cytoplasmic membrane in the host. The chain is Type VII secretion system accessory factor EsaA from Staphylococcus aureus (strain USA300).